The chain runs to 39 residues: Photosystem II reaction center protein J (39 aa).

A helical transmembrane segment spans residues isoleucine 7 to phenylalanine 27.

Belongs to the PsbJ family. PSII is composed of 1 copy each of membrane proteins PsbA, PsbB, PsbC, PsbD, PsbE, PsbF, PsbH, PsbI, PsbJ, PsbK, PsbL, PsbM, PsbT, PsbX, PsbY, PsbZ, Psb30/Ycf12, peripheral proteins PsbO, CyanoQ (PsbQ), PsbU, PsbV and a large number of cofactors. It forms dimeric complexes.

The protein localises to the cellular thylakoid membrane. In terms of biological role, this protein is a component of the reaction center of photosystem II. One of the components of the core complex of photosystem II (PSII). PSII is a light-driven water:plastoquinone oxidoreductase that uses light energy to abstract electrons from H(2)O, generating O(2) and a proton gradient subsequently used for ATP formation. It consists of a core antenna complex that captures photons, and an electron transfer chain that converts photonic excitation into a charge separation. The sequence is that of Photosystem II reaction center protein J from Picosynechococcus sp. (strain ATCC 27264 / PCC 7002 / PR-6) (Agmenellum quadruplicatum).